A 206-amino-acid chain; its full sequence is Amelogenin, Y isoform (206 aa).

The N-terminal stretch at 1–16 is a signal peptide; it reads MGTWILFACLVGAAFA. Residues 118–180 form a disordered region; that stretch reads VPGQQSMTPT…PPLPPMFPLR (63 aa). Residues 128 to 142 show a composition bias toward low complexity; it reads QHHQPNLPLPAQQPF. Positions 143 to 180 are enriched in pro residues; it reads QPQPVQPQPHQPMQPQPPVQPMQPLLPQPPLPPMFPLR.

The protein belongs to the amelogenin family.

It is found in the secreted. The protein localises to the extracellular space. Its subcellular location is the extracellular matrix. Plays a role in biomineralization. Seems to regulate the formation of crystallites during the secretory stage of tooth enamel development. Thought to play a major role in the structural organization and mineralization of developing enamel. The polypeptide is Amelogenin, Y isoform (AMELY) (Homo sapiens (Human)).